Reading from the N-terminus, the 383-residue chain is MSTWLLPENIADVLPSEARKIEELRRRLLDRFRAYGYEMVMPPLLEYLESLLTGGGRDLNLRTFKLVDQLSGRTLGLRADITPQVARIDAHLLNRQGVTRLCYAGNVLHTRPRGLHATREQIQIGAEIYGHAGLEADLEIQQLMLDALHLAGLGRVRLDLCHAAVLGALVDSEPAAAELGESLYETLAGKDVPLLTELTANLPPVTRDALRALPTLYGDATVLEEARARLPNAPEISRALDDLAFLAQQVGGAEVMIDLADLRGYAYHSGVMFSAYVDGVPNAVARGGRYDKVGQAYGRARAATGFSLDLREVARISPIEARSSAILAPWQAGEALRTSVAALRDAGEVVIQALPGHDHALDEFACDRVLVERDGQWVVELKS.

This sequence belongs to the class-II aminoacyl-tRNA synthetase family. HisZ subfamily. As to quaternary structure, heteromultimer composed of HisG and HisZ subunits.

The protein localises to the cytoplasm. Its pathway is amino-acid biosynthesis; L-histidine biosynthesis; L-histidine from 5-phospho-alpha-D-ribose 1-diphosphate: step 1/9. Functionally, required for the first step of histidine biosynthesis. May allow the feedback regulation of ATP phosphoribosyltransferase activity by histidine. This chain is ATP phosphoribosyltransferase regulatory subunit, found in Paraburkholderia phymatum (strain DSM 17167 / CIP 108236 / LMG 21445 / STM815) (Burkholderia phymatum).